We begin with the raw amino-acid sequence, 145 residues long: Transcription antitermination protein NusB (145 aa).

The protein belongs to the NusB family.

Involved in transcription antitermination. Required for transcription of ribosomal RNA (rRNA) genes. Binds specifically to the boxA antiterminator sequence of the ribosomal RNA (rrn) operons. The protein is Transcription antitermination protein NusB of Paraburkholderia phymatum (strain DSM 17167 / CIP 108236 / LMG 21445 / STM815) (Burkholderia phymatum).